A 361-amino-acid polypeptide reads, in one-letter code: Putative agmatine deiminase (361 aa).

Cys354 (amidino-cysteine intermediate) is an active-site residue.

The protein belongs to the agmatine deiminase family.

It catalyses the reaction agmatine + H2O = N-carbamoylputrescine + NH4(+). This Streptococcus pneumoniae (strain Hungary19A-6) protein is Putative agmatine deiminase.